We begin with the raw amino-acid sequence, 354 residues long: Carbonic anhydrase 12 (354 aa).

An N-terminal signal peptide occupies residues 1–24 (MPHRSLRATVVLLLVILKKQPSSS). Residues 25–301 (APLNGSKWTY…QGLLTDTGLS (277 aa)) lie on the Extracellular side of the membrane. N-linked (GlcNAc...) asparagine glycosylation is found at Asn28, Asn42, Asn80, and Asn88. The Alpha-carbonic anhydrase domain maps to 30 to 290 (SKWTYVGPAG…FDERLVYISF (261 aa)). Cys50 and Cys231 form a disulfide bridge. His94 functions as the Proton donor/acceptor in the catalytic mechanism. Residues His120, His122, and His146 each contribute to the Zn(2+) site. 227 to 228 (TT) contacts substrate. A helical transmembrane segment spans residues 302 to 322 (LGIILSVALAGVLGISIVLAV). Topologically, residues 323-354 (SIWLFKRKKSKKGDNKGVIYKPAIKKEAEVHA) are cytoplasmic.

This sequence belongs to the alpha-carbonic anhydrase family. In terms of assembly, homodimer. It depends on Zn(2+) as a cofactor.

Its subcellular location is the membrane. The protein localises to the cell membrane. It catalyses the reaction hydrogencarbonate + H(+) = CO2 + H2O. Its activity is regulated as follows. Inhibited by acetazolamide. Functionally, reversible hydration of carbon dioxide. This is Carbonic anhydrase 12 from Mus musculus (Mouse).